The chain runs to 217 residues: MASTPQIAVVDYDMGNLHSACKGLEAAGANPIVTADPATILAADGVLLPGVGAFDPAMDHLRDRQLIEPLHQAATSGKPFLGICLGLQLLFEASEEGQSAGLGILPGRVQRFRSEPGLVIPHMGWNQLQLQQPDCPLWQNLGADPWFYFVHTYYVVPSEPTLTAATVQHGSQPVTAAIARDRLWAVQFHPEKSAKAGLQLLANFVTQVAAAQLQTVA.

Positions 6–214 (QIAVVDYDMG…VTQVAAAQLQ (209 aa)) constitute a Glutamine amidotransferase type-1 domain. Residue cysteine 84 is the Nucleophile of the active site. Residues histidine 189 and glutamate 191 contribute to the active site.

As to quaternary structure, heterodimer of HisH and HisF.

The protein resides in the cytoplasm. The enzyme catalyses 5-[(5-phospho-1-deoxy-D-ribulos-1-ylimino)methylamino]-1-(5-phospho-beta-D-ribosyl)imidazole-4-carboxamide + L-glutamine = D-erythro-1-(imidazol-4-yl)glycerol 3-phosphate + 5-amino-1-(5-phospho-beta-D-ribosyl)imidazole-4-carboxamide + L-glutamate + H(+). It catalyses the reaction L-glutamine + H2O = L-glutamate + NH4(+). The protein operates within amino-acid biosynthesis; L-histidine biosynthesis; L-histidine from 5-phospho-alpha-D-ribose 1-diphosphate: step 5/9. Functionally, IGPS catalyzes the conversion of PRFAR and glutamine to IGP, AICAR and glutamate. The HisH subunit catalyzes the hydrolysis of glutamine to glutamate and ammonia as part of the synthesis of IGP and AICAR. The resulting ammonia molecule is channeled to the active site of HisF. This chain is Imidazole glycerol phosphate synthase subunit HisH, found in Synechococcus sp. (strain ATCC 27144 / PCC 6301 / SAUG 1402/1) (Anacystis nidulans).